Consider the following 625-residue polypeptide: tRNA uridine 5-carboxymethylaminomethyl modification enzyme MnmG (625 aa).

11–16 (GAGHAG) provides a ligand contact to FAD. 271-285 (GPRYCPSIETKIVTF) is a binding site for NAD(+).

The protein belongs to the MnmG family. In terms of assembly, homodimer. Heterotetramer of two MnmE and two MnmG subunits. Requires FAD as cofactor.

The protein resides in the cytoplasm. NAD-binding protein involved in the addition of a carboxymethylaminomethyl (cmnm) group at the wobble position (U34) of certain tRNAs, forming tRNA-cmnm(5)s(2)U34. This Parabacteroides distasonis (strain ATCC 8503 / DSM 20701 / CIP 104284 / JCM 5825 / NCTC 11152) protein is tRNA uridine 5-carboxymethylaminomethyl modification enzyme MnmG.